Here is a 328-residue protein sequence, read N- to C-terminus: Biotin synthase (328 aa).

The Radical SAM core domain occupies 48–278 (FTGNSASLCS…GKSLSVCGGR (231 aa)). 3 residues coordinate [4Fe-4S] cluster: cysteine 66, cysteine 70, and cysteine 73. Residues serine 143 and cysteine 203 each contribute to the [2Fe-2S] cluster site.

The protein belongs to the radical SAM superfamily. Biotin synthase family. As to quaternary structure, homodimer. The cofactor is [4Fe-4S] cluster. It depends on [2Fe-2S] cluster as a cofactor.

The enzyme catalyses (4R,5S)-dethiobiotin + (sulfur carrier)-SH + 2 reduced [2Fe-2S]-[ferredoxin] + 2 S-adenosyl-L-methionine = (sulfur carrier)-H + biotin + 2 5'-deoxyadenosine + 2 L-methionine + 2 oxidized [2Fe-2S]-[ferredoxin]. It functions in the pathway cofactor biosynthesis; biotin biosynthesis; biotin from 7,8-diaminononanoate: step 2/2. In terms of biological role, catalyzes the conversion of dethiobiotin (DTB) to biotin by the insertion of a sulfur atom into dethiobiotin via a radical-based mechanism. This Pelobacter propionicus (strain DSM 2379 / NBRC 103807 / OttBd1) protein is Biotin synthase.